We begin with the raw amino-acid sequence, 531 residues long: Putative UDP-glucuronosyltransferase ugt-46 (531 aa).

An N-terminal signal peptide occupies residues 1–17 (MRLIFVLLATFVNAAFS). N-linked (GlcNAc...) asparagine glycosylation is present at Asn304. Residues 493–513 (VIIPVFWLSISLVIPTIFGWY) traverse the membrane as a helical segment.

It belongs to the UDP-glycosyltransferase family.

It localises to the membrane. It carries out the reaction glucuronate acceptor + UDP-alpha-D-glucuronate = acceptor beta-D-glucuronoside + UDP + H(+). This is Putative UDP-glucuronosyltransferase ugt-46 (ugt-46) from Caenorhabditis elegans.